A 658-amino-acid polypeptide reads, in one-letter code: MRNCVSPLLFAWTKHLRLREFKIPFPNRLVVRSLNQLSVHHEKVTGCRPRQASSDELHKYSKSASNEAFLSSFAENQLFHKCLPSSAGAVLSENDLMYIIRKVSEVYADNKTEKVTVPFDKHKNPFLIYVKKRFAECFDKNPDLCLIVYSKLEVETLAKITPIWINVAKKNKKEDFLVELCLRFLERFRSCNLTEQAILYQNFRENWWSNIKLPQNLKSLYVELCLVYHFHNSHLGMDSSTVSNLKRFCFSESLGHIFAPLRFQNQQLPLQHVYAFLFSIAYRDNQVDTAHFLYKQWSRAGMGPLPKDAFIKFVQLLSKNRNWVLMRDIVQLEEYNSYLLDHRIVSAFLKPLSEKGNYKDILSLISVWQHSVWRPSLAYLQVVYSFSMRALLVNRQYSSAFAFFWKIDPYIRNERLVSQMLQAASQLHYHDLILYVINTYYSGNIMKNLGNKDLICITQSSPPCNISGIKPGSLKLSPTTNTVLAKSICYWLNDAMALLFLLENQLNCKHSLFQRKSLIILLNGILNCPHSSYDLQFRAVSLLTGRIRLNVDFEVSVLASQLVFFVKHRDFKRTLITMKAISKLQKNFDVRIWNYWLVALIQQKLYSRAVKVYSKLICSSAVRNDTTRSLIRLIPKSYFKSYPLLKESETEKKTNSAL.

The transit peptide at 1 to 29 directs the protein to the mitochondrion; it reads MRNCVSPLLFAWTKHLRLREFKIPFPNRL. 2 PPR repeats span residues 130–164 and 220–254; these read VKKRFAECFDKNPDLCLIVYSKLEVETLAKITPIW and LYVELCLVYHFHNSHLGMDSSTVSNLKRFCFSESL.

Its subcellular location is the mitochondrion. Functionally, mitochondrial RNA-binding protein required for the stability of the atp6 mRNA. This Schizosaccharomyces pombe (strain 972 / ATCC 24843) (Fission yeast) protein is Pentatricopeptide repeat-containing protein 7, mitochondrial (ppr7).